The primary structure comprises 2581 residues: MADPIMDLFDDPNLFGLDSLTDDSFNQVTQDPIEEALGLPSSLDSLDQMNQDGGGGDVGNSSASELVPPPEETAPTELSKESTAPAPESITLHDYTTQPASQEQPAQPVLQTSTPTSGLLQVSKSQEILSQGNPFMGVSATAVSSSSAGGQPPQSAPKIVILKAPPSSSVTGAHVAQIQAQGITSTAQPLVAGTANGGKVTFTKVLTGTPLRPGVSIVSGNTVLAAKVPGNQAAVQRIVQPSRPVKQLVLQPVKGSAPAGNPGATGPPLKPAVTLTSTPTQGESKRITLVLQQPQSGGPQGHRHVVLGSLPGKIVLQGNQLAALTQAKNAQGQPAKVVTIQLQVQQPQQKIQIVPQPPSSQPQPQQPPSTQPVTLSSVQQAQIMGPGQSPGQRLSVPVKVVLQPQAGSSQGASSGLSVVKVLSASEVAALSSPASSAPHSGGKTGMEENRRLEHQKKQEKANRIVAEAIARARARGEQNIPRVLNEDELPSVRPEEEGEKKRRKKSAGERLKEEKPKKSKTSGASKTKGKSKLNTITPVVGKKRKRNTSSDNSDVEVMPAQSPREDEESSIQKRRSNRQVKRKKYTEDLDIKITDDEEEEEVDVTGPIKPEPILPEPVQEPDGETLPSMQFFVENPSEEDAAIVDKVLSMRIVKKELPSGQYTEAEEFFVKYKNYSYLHCEWATISQLEKDKRIHQKLKRFKTKMAQMRHFFHEDEEPFNPDYVEVDRILDESHSIDKDNGEPVIYYLVKWCSLPYEDSTWELKEDVDEGKIREFKRIQSRHPELKRVNRPQASAWKKLELSHEYKNRNQLREYQLEGVNWLLFNWYNRQNCILADEMGLGKTIQSIAFLQEVYNVGIHGPFLVIAPLSTITNWEREFNTWTEMNTIVYHGSLASRQMIQQYEMYCKDSRGRLIPGAYKFDALITTFEMILSDCPELREIEWRCVIIDEAHRLKNRNCKLLDSLKHMDLEHKVLLTGTPLQNTVEELFSLLHFLEPSQFPSESEFLKDFGDLKTEEQVQKLQAILKPMMLRRLKEDVEKNLAPKQETIIEVELTNIQKKYYRAILEKNFSFLSKGAGHTNMPNLLNTMMELRKCCNHPYLINGAEEKILTEFREACHIIPHDFHLQAMVRSAGKLVLIDKLLPKLKAGGHKVLIFSQMVRCLDILEDYLIQRRYLYERIDGRVRGNLRQAAIDRFSKPDSDRFVFLLCTRAGGLGINLTAADTCIIFDSDWNPQNDLQAQARCHRIGQSKAVKVYRLITRNSYEREMFDKASLKLGLDKAVLQSMSGRDGNITGIQQFSKKEIEDLLRKGAYAAIMEEDDEGSKFCEEDIDQILLRRTTTITIESEGKGSTFAKASFVASENRTDISLDDPNFWQKWAKKADLDMDLLNSKNNLVIDTPRVRKQTRHFSTLKDDDLVEFSDLESEDDERPRSRRHDRHHAYGRTDCFRVEKHLLVYGWGRWRDILSHGRFKRRMTERDVETICRAILVYCLLHYRGDENIKGFIWDLISPAENGKTKELQNHSGLSIPVPRGRKGKKVKSQSTFDIHKADWIRKYNPDTLFQDESYKKHLKHQCNKVLLRVRMLYYLRQEVIGDQAEKVLGGAIASEIDIWFPVVDQLEVPTTWWDSEADKSLLIGVFKHGYEKYNTMRADPALCFLEKAGRPDDKAIAAEHRVLDNFSDIVEGVDFDKDCEDPEYKPLQGPPKDQDDEGDPLMMMDEEISVIDGDEAQVTQQPGHLFWPPGSALTARLRRLVTAYQRSYKREQMKIEAAERGDRRRRRCEAAFKLKEIARREKQQRWTRREQTDFYRVVSTFGVEYDPDTMQFHWDRFRTFARLDKKTDESLTKYFHGFVAMCRQVCRLPPAAGDEPPDPNLFIEPITEERASRTLYRIELLRRLREQVLCHPLLEDRLALCQPPGPELPKWWEPVRHDGELLRGAARHGVSQTDCNIMQDPDFSFLAARMNYMQNHQAGAPAPSLSRCSTPLLHQQYTSRTASPLPLRPDAPVEKSPEETATQVPSLESLTLKLEHEVVARSRPTPQDYEMRVSPSDTTPLVSRSVPPVKLEDEDDSDSELDLSKLSPSSSSSSSSSSSSSSTDESEDEKEEKLTDQSRSKLYDEESLLSLTMSQDGFPNEDGEQMTPELLLLQERQRASEWPKDRVLINRIDLVCQAVLSGKWPSSRRSQEMVTGGILGPGNHLLDSPSLTPGEYGDSPVPTPRSSSAASMAEEEASAVSTAAAQFTKLRRGMDEKEFTVQIKDEEGLKLTFQKHKLMANGVMGDGHPLFHKKKGNRKKLVELEVECMEEPNHLDVDLETRIPVINKVDGTLLVGEDAPRRAELEMWLQGHPEFAVDPRFLAYMEDRRKQKWQRCKKNNKAELNCLGMEPVQTANSRNGKKGHHTETVFNRVLPGPIAPESSKKRARRMRPDLSKMMALMQGGSTGSLSLHNTFQHSSSGLQSVSSLGHSSATSASLPFMPFVMGGAPSSPHVDSSTMLHHHHHHPHPHHHHHHHPGLRAPGYPSSPVTTASGTTLRLPPLQPEEDDDEDEEDDDDLSQGYDSSERDFSLIDDPMMPANSDSSEDADD.

5 disordered regions span residues D22–T114, V253–E283, Q349–Q392, A429–R582, and D596–P615. Polar residues-rich tracts occupy residues S42–Q51 and D94–T114. Over residues G255 to P267 the composition is skewed to low complexity. The span at P355–T370 shows a compositional bias: pro residues. At S432 the chain carries Phosphoserine. 2 stretches are compositionally biased toward basic and acidic residues: residues G445–N462 and R493–P516. Phosphoserine occurs at positions 553 and 562. Basic residues predominate over residues Q572–R582. Residue K609 forms a Glycyl lysine isopeptide (Lys-Gly) (interchain with G-Cter in SUMO) linkage. 2 Chromo domains span residues A642–R709 and V724–R790. Residues L823 to S997 form the Helicase ATP-binding domain. D836 to T843 is a binding site for ATP. Residues D948–H951 carry the DEAH box motif. Residues L1137–R1288 enclose the Helicase C-terminal domain. Phosphoserine occurs at positions 1420 and 1424. Residues E1692–P1712 form a disordered region. An interaction with FAM124B region spans residues I1789–E2302. Phosphoserine occurs at positions 1976 and 1978. The interval S1991 to D2116 is disordered. T1993 bears the Phosphothreonine mark. Phosphoserine occurs at positions 1995 and 2008. The span at E2011 to S2021 shows a compositional bias: polar residues. A Glycyl lysine isopeptide (Lys-Gly) (interchain with G-Cter in SUMO2) cross-link involves residue K2025. Position 2046 is a phosphoserine (S2046). T2051 is modified (phosphothreonine). The segment covering E2064–L2073 has biased composition (acidic residues). Residues S2069 and S2071 each carry the phosphoserine modification. Residues S2076–T2095 are compositionally biased toward low complexity. The segment covering E2103 to D2116 has biased composition (basic and acidic residues). Residues S2182, S2200, and S2202 each carry the phosphoserine modification. A disordered region spans residues G2189–A2229. The residue at position 2204 (T2204) is a Phosphothreonine. S2211 bears the Phosphoserine mark. T2215 is subject to Phosphothreonine. A compositionally biased stretch (low complexity) spans S2218 to A2229. S2223 carries the phosphoserine modification. K2256 is covalently cross-linked (Glycyl lysine isopeptide (Lys-Gly) (interchain with G-Cter in SUMO2)). The tract at residues P2481–D2581 is disordered. The span at L2492 to G2510 shows a compositional bias: basic residues. Position 2519 is a phosphoserine (S2519). The segment covering S2519–T2528 has biased composition (polar residues). Acidic residues predominate over residues P2536–L2550.

The protein belongs to the SNF2/RAD54 helicase family. CHD8 subfamily. Interacts with p53/TP53, histone H1, CTNNB1, CTCF and PIAS3. Component of some MLL1/MLL complex, at least composed of the core components KMT2A/MLL1, ASH2L, HCFC1/HCF1, WDR5 and RBBP5, as well as the facultative components BACC1, CHD8, E2F6, HSP70, INO80C, KANSL1, LAS1L, MAX, MCRS1, MGA, KAT8/MOF, PELP1, PHF20, PRP31, RING2, RUVB1/TIP49A, RUVB2/TIP49B, SENP3, TAF1, TAF4, TAF6, TAF7, TAF9 and TEX10. Interacts with CHD7. Interacts with FAM124B. Interacts with TLK2. Interacts with HNRNPL in an RNA-dependent manner. In terms of processing, sumoylated.

It is found in the nucleus. It catalyses the reaction ATP + H2O = ADP + phosphate + H(+). Functionally, ATP-dependent chromatin-remodeling factor, it slides nucleosomes along DNA; nucleosome sliding requires ATP. Acts as a transcription repressor by remodeling chromatin structure and recruiting histone H1 to target genes. Suppresses p53/TP53-mediated apoptosis by recruiting histone H1 and preventing p53/TP53 transactivation activity. Acts as a negative regulator of Wnt signaling pathway by regulating beta-catenin (CTNNB1) activity. Negatively regulates CTNNB1-targeted gene expression by being recruited specifically to the promoter regions of several CTNNB1 responsive genes. Involved in both enhancer blocking and epigenetic remodeling at chromatin boundary via its interaction with CTCF. Acts as a suppressor of STAT3 activity by suppressing the LIF-induced STAT3 transcriptional activity. Also acts as a transcription activator via its interaction with ZNF143 by participating in efficient U6 RNA polymerase III transcription. Regulates alternative splicing of a core group of genes involved in neuronal differentiation, cell cycle and DNA repair. Enables H3K36me3-coupled transcription elongation and co-transcriptional RNA processing likely via interaction with HNRNPL. This Homo sapiens (Human) protein is Chromodomain-helicase-DNA-binding protein 8.